The following is a 130-amino-acid chain: Small ribosomal subunit protein uS11 (130 aa).

Belongs to the universal ribosomal protein uS11 family. Part of the 30S ribosomal subunit. Interacts with proteins S7 and S18. Binds to IF-3.

In terms of biological role, located on the platform of the 30S subunit, it bridges several disparate RNA helices of the 16S rRNA. Forms part of the Shine-Dalgarno cleft in the 70S ribosome. This is Small ribosomal subunit protein uS11 from Borreliella afzelii (strain PKo) (Borrelia afzelii).